The sequence spans 200 residues: Holliday junction branch migration complex subunit RuvA (200 aa).

The segment at 1–63 is domain I; the sequence is MIALLTGQIA…EDAILLYGFR (63 aa). The segment at 64–142 is domain II; sequence TRTEKSFFQL…KLDSGSIPAG (79 aa). Residues 143 to 153 are flexible linker; that stretch reads DAVGRSLPAGS. The segment at 153-200 is domain III; sequence SVLDDVSSALVNLGYKDPQVRKVLAELDCAGSASVEEVLKQALKILMK.

This sequence belongs to the RuvA family. Homotetramer. Forms an RuvA(8)-RuvB(12)-Holliday junction (HJ) complex. HJ DNA is sandwiched between 2 RuvA tetramers; dsDNA enters through RuvA and exits via RuvB. An RuvB hexamer assembles on each DNA strand where it exits the tetramer. Each RuvB hexamer is contacted by two RuvA subunits (via domain III) on 2 adjacent RuvB subunits; this complex drives branch migration. In the full resolvosome a probable DNA-RuvA(4)-RuvB(12)-RuvC(2) complex forms which resolves the HJ.

The protein resides in the cytoplasm. Functionally, the RuvA-RuvB-RuvC complex processes Holliday junction (HJ) DNA during genetic recombination and DNA repair, while the RuvA-RuvB complex plays an important role in the rescue of blocked DNA replication forks via replication fork reversal (RFR). RuvA specifically binds to HJ cruciform DNA, conferring on it an open structure. The RuvB hexamer acts as an ATP-dependent pump, pulling dsDNA into and through the RuvAB complex. HJ branch migration allows RuvC to scan DNA until it finds its consensus sequence, where it cleaves and resolves the cruciform DNA. The sequence is that of Holliday junction branch migration complex subunit RuvA from Trichlorobacter lovleyi (strain ATCC BAA-1151 / DSM 17278 / SZ) (Geobacter lovleyi).